The chain runs to 230 residues: Orotidine 5'-phosphate decarboxylase (230 aa).

Residues aspartate 11, lysine 34, 61 to 70 (DLKLHDIPNT), threonine 117, arginine 179, glutamine 188, glycine 208, and arginine 209 contribute to the substrate site. Lysine 63 serves as the catalytic Proton donor.

This sequence belongs to the OMP decarboxylase family. Type 1 subfamily. In terms of assembly, homodimer.

It catalyses the reaction orotidine 5'-phosphate + H(+) = UMP + CO2. The protein operates within pyrimidine metabolism; UMP biosynthesis via de novo pathway; UMP from orotate: step 2/2. Catalyzes the decarboxylation of orotidine 5'-monophosphate (OMP) to uridine 5'-monophosphate (UMP). This is Orotidine 5'-phosphate decarboxylase from Streptococcus pyogenes serotype M49 (strain NZ131).